A 221-amino-acid chain; its full sequence is UPF0758 protein PC1_4100 (221 aa).

Residues 99 to 221 (AMLNPQATGQ…YVSFAERGWI (123 aa)) form the MPN domain. The Zn(2+) site is built by His170, His172, and Asp183. The JAMM motif motif lies at 170 to 183 (HNHPSGKAEPSQAD).

Belongs to the UPF0758 family. YicR subfamily.

In Pectobacterium carotovorum subsp. carotovorum (strain PC1), this protein is UPF0758 protein PC1_4100.